Reading from the N-terminus, the 83-residue chain is Sulfur carrier protein TusA (83 aa).

The active-site Cysteine persulfide intermediate is cysteine 19.

This sequence belongs to the sulfur carrier protein TusA family.

The protein resides in the cytoplasm. In terms of biological role, sulfur carrier protein which probably makes part of a sulfur-relay system. The protein is Sulfur carrier protein TusA of Vibrio atlanticus (strain LGP32) (Vibrio splendidus (strain Mel32)).